A 283-amino-acid polypeptide reads, in one-letter code: Putative cytochrome b-c1 complex subunit Rieske-like protein 1 (283 aa).

The helical transmembrane segment at 116 to 149 threads the bilayer; sequence TEARKGFSYLVTGVTTVGVAYAAKNAVTQFVSSM. Residues 196-281 form the Rieske domain; that stretch reads EAAVELSQLR…YEFTSDDMVI (86 aa). The [2Fe-2S] cluster site is built by Cys226, His228, Cys245, and His248. Cysteines 231 and 247 form a disulfide.

It belongs to the Rieske iron-sulfur protein family. It depends on [2Fe-2S] cluster as a cofactor.

The protein resides in the membrane. This Homo sapiens (Human) protein is Putative cytochrome b-c1 complex subunit Rieske-like protein 1 (UQCRFS1P1).